The sequence spans 183 residues: Probable GTP-binding protein EngB (183 aa).

Residues aspartate 17–asparagine 183 form the EngB-type G domain. GTP contacts are provided by residues glycine 25–serine 32, glycine 51–alanine 55, aspartate 69–glycine 72, threonine 137–aspartate 140, and serine 166–alanine 168. 2 residues coordinate Mg(2+): serine 32 and threonine 53.

Belongs to the TRAFAC class TrmE-Era-EngA-EngB-Septin-like GTPase superfamily. EngB GTPase family. Mg(2+) serves as cofactor.

Functionally, necessary for normal cell division and for the maintenance of normal septation. In Aquifex aeolicus (strain VF5), this protein is Probable GTP-binding protein EngB.